Here is a 179-residue protein sequence, read N- to C-terminus: Large ribosomal subunit protein uL5 (179 aa).

This sequence belongs to the universal ribosomal protein uL5 family. In terms of assembly, part of the 50S ribosomal subunit; part of the 5S rRNA/L5/L18/L25 subcomplex. Contacts the 5S rRNA and the P site tRNA. Forms a bridge to the 30S subunit in the 70S ribosome.

This is one of the proteins that bind and probably mediate the attachment of the 5S RNA into the large ribosomal subunit, where it forms part of the central protuberance. In the 70S ribosome it contacts protein S13 of the 30S subunit (bridge B1b), connecting the 2 subunits; this bridge is implicated in subunit movement. Contacts the P site tRNA; the 5S rRNA and some of its associated proteins might help stabilize positioning of ribosome-bound tRNAs. This Geobacter sp. (strain M21) protein is Large ribosomal subunit protein uL5.